A 563-amino-acid polypeptide reads, in one-letter code: MSETINTAAQFPSFEKPTVQFNEKGWGPCELPDTFKDVPYQPFSKNDRLGKICDWTSTSNNDKKYQNKYASTFGTGNQYAYYHEEDETTFHLVDTARVQKPPHQRGRFRNMRNSRSGRGRNARGGLNTHGHGMTTLNSKNVKARDPRRGVGKRFGNRGPPPKMRESSVAVRADWASIEEMDFPRLMKLSLPNIKEGEDITTCGTLEYYDKTYDRINVKNEKPLQKIDRIVHTVTTTDDPVIRRLSKTIGNVFATDAILATIMCSTRSNYSWDIVIEKVGEKIFMDKRDHTEFDLLTVNETSVEPPTDDDSSCNSPRNLAIEATFINHNFSQQVLKTGDQEAKYKFEEPNPFISEDEDIQVASVGYRYKKWELGSDIVLVARCEHDGVLQTPSGEPQFLSIKALNEWDSKLANGVEWRQKLDTQRGAVLANELRNNACKLAKWTVQAVLAGSDQLKLGYVSRINPRDHSRHVILGTQQFKPHEFATQINLSMDNAWGILRCIIDLVMKQKDGKYLIMKDPNKPIIRLYDIPDNTFDSDDSDDGEGDDGEGFQQVYNYANNSNKI.

The tract at residues 98-167 (VQKPPHQRGR…GPPPKMRESS (70 aa)) is disordered. A compositionally biased stretch (basic residues) spans 100–121 (KPPHQRGRFRNMRNSRSGRGRN). Thr-128 is modified (phosphothreonine). The tract at residues 291–305 (EFDLLTVNETSVEPP) is RNA gate.

The protein belongs to the eIF-3 subunit D family. As to quaternary structure, component of the eukaryotic translation initiation factor 3 (eIF-3) complex. The eIF-3 complex interacts with pix.

Its subcellular location is the cytoplasm. In terms of biological role, mRNA cap-binding component of the eukaryotic translation initiation factor 3 (eIF-3) complex, which is involved in protein synthesis of a specialized repertoire of mRNAs and, together with other initiation factors, stimulates binding of mRNA and methionyl-tRNAi to the 40S ribosome. The eIF-3 complex specifically targets and initiates translation of a subset of mRNAs involved in cell proliferation. In the eIF-3 complex, eif3d specifically recognizes and binds the 7-methylguanosine cap of a subset of mRNAs. This chain is Eukaryotic translation initiation factor 3 subunit D-1, found in Drosophila mojavensis (Fruit fly).